We begin with the raw amino-acid sequence, 574 residues long: R-linalool synthase, chloroplastic (574 aa).

Residues 1–40 (MSCARITVTLPYRSAKTSIQRGITHCPALLRPRFSACTPL) constitute a chloroplast transit peptide. Polar residues predominate over residues 52–61 (INGDNSPLKN). A disordered region spans residues 52 to 71 (INGDNSPLKNTHQHVEERSS). 5 residues coordinate (2E)-geranyl diphosphate: Arg287, Asp324, Asp328, Arg467, and Asp470. Asp324 and Asp328 together coordinate Mg(2+). The DDXXD motif motif lies at 324-328 (DDIFD). Mg(2+) contacts are provided by Asp470, Thr474, and Glu478.

This sequence belongs to the terpene synthase family. Tpsb subfamily. Requires Mg(2+) as cofactor. It depends on Mn(2+) as a cofactor.

It localises to the plastid. The protein localises to the chloroplast. The enzyme catalyses (2E)-geranyl diphosphate + H2O = (R)-linalool + diphosphate. It participates in secondary metabolite biosynthesis; terpenoid biosynthesis. Its function is as follows. Monoterpene synthase that catalyzes the formation of (3R)-linalool from geranyl diphosphate. The chain is R-linalool synthase, chloroplastic (LIS) from Ocimum basilicum (Sweet basil).